A 335-amino-acid chain; its full sequence is 4-hydroxy-3-methylbut-2-enyl diphosphate reductase 2 (335 aa).

C37 contributes to the [4Fe-4S] cluster binding site. H66 and H99 together coordinate (2E)-4-hydroxy-3-methylbut-2-enyl diphosphate. H66 and H99 together coordinate dimethylallyl diphosphate. Residues H66 and H99 each coordinate isopentenyl diphosphate. C121 serves as a coordination point for [4Fe-4S] cluster. H149 provides a ligand contact to (2E)-4-hydroxy-3-methylbut-2-enyl diphosphate. A dimethylallyl diphosphate-binding site is contributed by H149. An isopentenyl diphosphate-binding site is contributed by H149. The active-site Proton donor is E151. T189 is a binding site for (2E)-4-hydroxy-3-methylbut-2-enyl diphosphate. C219 is a binding site for [4Fe-4S] cluster. 4 residues coordinate (2E)-4-hydroxy-3-methylbut-2-enyl diphosphate: S247, S248, N249, and S292. Residues S247, S248, N249, and S292 each coordinate dimethylallyl diphosphate. Residues S247, S248, N249, and S292 each coordinate isopentenyl diphosphate.

This sequence belongs to the IspH family. It depends on [4Fe-4S] cluster as a cofactor.

It carries out the reaction isopentenyl diphosphate + 2 oxidized [2Fe-2S]-[ferredoxin] + H2O = (2E)-4-hydroxy-3-methylbut-2-enyl diphosphate + 2 reduced [2Fe-2S]-[ferredoxin] + 2 H(+). It catalyses the reaction dimethylallyl diphosphate + 2 oxidized [2Fe-2S]-[ferredoxin] + H2O = (2E)-4-hydroxy-3-methylbut-2-enyl diphosphate + 2 reduced [2Fe-2S]-[ferredoxin] + 2 H(+). It participates in isoprenoid biosynthesis; dimethylallyl diphosphate biosynthesis; dimethylallyl diphosphate from (2E)-4-hydroxy-3-methylbutenyl diphosphate: step 1/1. It functions in the pathway isoprenoid biosynthesis; isopentenyl diphosphate biosynthesis via DXP pathway; isopentenyl diphosphate from 1-deoxy-D-xylulose 5-phosphate: step 6/6. Its function is as follows. Catalyzes the conversion of 1-hydroxy-2-methyl-2-(E)-butenyl 4-diphosphate (HMBPP) into a mixture of isopentenyl diphosphate (IPP) and dimethylallyl diphosphate (DMAPP). Acts in the terminal step of the DOXP/MEP pathway for isoprenoid precursor biosynthesis. Has a higher activity compared with LytB2. Is essential for M.tuberculosis growth in vitro. This chain is 4-hydroxy-3-methylbut-2-enyl diphosphate reductase 2, found in Mycobacterium tuberculosis (strain ATCC 25618 / H37Rv).